The chain runs to 108 residues: MSLAKAKEIVSGNPVAVFSKTYCPFCVSVKDLLSKLGATFKAVELDSEKDGSEIQAALAEWTGQRTVPNVFIGRKHIGGCDATTALHREGKLLPLLTEAGAIAKTSTA.

A Glutaredoxin domain is found at Leu3–Ala103. Residues Cys23 and Cys26 are joined by a disulfide bond.

It belongs to the glutaredoxin family. CPYC subfamily.

Its subcellular location is the cytoplasm. Has a glutathione-disulfide oxidoreductase activity in the presence of NADPH and glutathione reductase. Reduces low molecular weight disulfides and proteins. This is Glutaredoxin from Solanum lycopersicum (Tomato).